Reading from the N-terminus, the 758-residue chain is 5-methyltetrahydropteroyltriglutamate--homocysteine methyltransferase (758 aa).

5-methyltetrahydropteroyltri-L-glutamate contacts are provided by residues 17 to 20 and Lys-117; that span reads RELK. Residues 434–436 and Glu-487 contribute to the L-homocysteine site; that span reads IGS. Residues 434–436 and Glu-487 contribute to the L-methionine site; that span reads IGS. 5-methyltetrahydropteroyltri-L-glutamate contacts are provided by residues 518 to 519 and Trp-564; that span reads RC. Asp-602 is an L-homocysteine binding site. Asp-602 lines the L-methionine pocket. A 5-methyltetrahydropteroyltri-L-glutamate-binding site is contributed by Glu-608. Residues His-644, Cys-646, and Glu-668 each coordinate Zn(2+). His-697 (proton donor) is an active-site residue. Cys-729 lines the Zn(2+) pocket.

Belongs to the vitamin-B12 independent methionine synthase family. The cofactor is Zn(2+).

It carries out the reaction 5-methyltetrahydropteroyltri-L-glutamate + L-homocysteine = tetrahydropteroyltri-L-glutamate + L-methionine. Its pathway is amino-acid biosynthesis; L-methionine biosynthesis via de novo pathway; L-methionine from L-homocysteine (MetE route): step 1/1. In terms of biological role, catalyzes the transfer of a methyl group from 5-methyltetrahydrofolate to homocysteine resulting in methionine formation. This Yersinia enterocolitica serotype O:8 / biotype 1B (strain NCTC 13174 / 8081) protein is 5-methyltetrahydropteroyltriglutamate--homocysteine methyltransferase.